The primary structure comprises 509 residues: Transmembrane protein 104 homolog (509 aa).

The Cytoplasmic segment spans residues 1–19; that stretch reads MPRLVNGREAAPTYSNLVG. A helical membrane pass occupies residues 20-40; the sequence is FIFIFNLIVGTGALTLPGVFA. The Extracellular portion of the chain corresponds to 41 to 45; it reads RAGWM. The chain crosses the membrane as a helical span at residues 46-66; the sequence is LSLIVIVLLAIISYMTVTFII. Residues 67–151 lie on the Cytoplasmic side of the membrane; sequence EAMACANAIR…ATLFFNEFGR (85 aa). A helical membrane pass occupies residues 152 to 172; the sequence is VMFYLCLIVYLYGDLSIYSAA. Residues 173–218 lie on the Extracellular side of the membrane; sequence VARSLRDVVCDQTNGTDTNNLMYWPGDFENNTSLACWKEHTISRLN. Residues Asn186, Asn202, and Asn203 are each glycosylated (N-linked (GlcNAc...) asparagine). The helical transmembrane segment at 219-239 threads the bilayer; sequence MYRVLLIGFTLIFGPFVYFNV. The Cytoplasmic segment spans residues 240–248; that stretch reads QKTKYLQML. A helical transmembrane segment spans residues 249-269; the sequence is TAAFRWMAFTLMICISLKLLI. The Extracellular portion of the chain corresponds to 270 to 277; it reads SRGAKGHP. Residues 278–298 form a helical membrane-spanning segment; the sequence is ATFNVYGIPSLFGACVYSFMC. Over 299–320 the chain is Cytoplasmic; the sequence is HHSLPSLLAPIRHKSMVSKILS. The helical transmembrane segment at 321-341 threads the bilayer; it reads IDYIIICAFYILLAMTGIFAF. Residues 342 to 361 lie on the Extracellular side of the membrane; the sequence is ERIEDLYTLDFLPYDVAYVD. A helical membrane pass occupies residues 362 to 382; sequence FWSGLLICIDYFLALFPIFTL. Over 383–411 the chain is Cytoplasmic; sequence STSFPIVAITLKNNLQSLFLDMSQYESYS. A helical membrane pass occupies residues 412–432; that stretch reads VILRLCFPLLAIIPPFCITYF. Topologically, residues 433–439 are extracellular; sequence TESLSSL. The helical transmembrane segment at 440-460 threads the bilayer; it reads VAFTGTYAGTGIQYIIPVFLV. At 461–487 the chain is on the cytoplasmic side; the sequence is YFARRTCSELLGSGVVNRFKSPFKSSA. Residues 488-508 traverse the membrane as a helical segment; sequence WLVFVFIWSILCVCLVSINLF. Position 509 (Ser509) is a topological domain, extracellular.

It belongs to the TMEM104 family.

The protein localises to the membrane. The polypeptide is Transmembrane protein 104 homolog (Drosophila melanogaster (Fruit fly)).